The following is a 149-amino-acid chain: MSKTLSFKTYSAKPGDVERKWYVVDAEGQILGRMAAEIAKVLRGKHKPEFTPHIDTGDFIVVTNAEKVALSGKKLDAKAYFSHSQYPGGVKFNHVKDLLRKKPEKVIEHAVWGMLPHNNLGRQLFKKLKVYPGATHPHESQSPIEMKVN.

It belongs to the universal ribosomal protein uL13 family. Part of the 50S ribosomal subunit.

Functionally, this protein is one of the early assembly proteins of the 50S ribosomal subunit, although it is not seen to bind rRNA by itself. It is important during the early stages of 50S assembly. This Chlorobium phaeovibrioides (strain DSM 265 / 1930) (Prosthecochloris vibrioformis (strain DSM 265)) protein is Large ribosomal subunit protein uL13.